Consider the following 223-residue polypeptide: uncharacterized protein (223 aa).

This is an uncharacterized protein from Treponema pallidum (strain Nichols).